We begin with the raw amino-acid sequence, 256 residues long: Small ribosomal subunit protein eS1A (256 aa).

The residue at position 2 (Ala-2) is an N-acetylalanine; partial.

This sequence belongs to the eukaryotic ribosomal protein eS1 family. Component of the small ribosomal subunit. Mature ribosomes consist of a small (40S) and a large (60S) subunit. The 40S subunit contains about 33 different proteins and 1 molecule of RNA (18S). The 60S subunit contains about 49 different proteins and 3 molecules of RNA (25S, 5.8S and 5S).

It is found in the cytoplasm. The polypeptide is Small ribosomal subunit protein eS1A (Scheffersomyces stipitis (strain ATCC 58785 / CBS 6054 / NBRC 10063 / NRRL Y-11545) (Yeast)).